A 156-amino-acid chain; its full sequence is Ribosome maturation factor RimP (156 aa).

The protein belongs to the RimP family.

The protein resides in the cytoplasm. Functionally, required for maturation of 30S ribosomal subunits. This Shouchella clausii (strain KSM-K16) (Alkalihalobacillus clausii) protein is Ribosome maturation factor RimP.